The following is a 147-amino-acid chain: Large ribosomal subunit protein uL13 (147 aa).

A disordered region spans residues 128 to 147; that stretch reads PEHPHSAQQPVPYELKQVAQ.

The protein belongs to the universal ribosomal protein uL13 family. In terms of assembly, part of the 50S ribosomal subunit.

Functionally, this protein is one of the early assembly proteins of the 50S ribosomal subunit, although it is not seen to bind rRNA by itself. It is important during the early stages of 50S assembly. The chain is Large ribosomal subunit protein uL13 from Mycobacterium bovis (strain BCG / Pasteur 1173P2).